Consider the following 1091-residue polypeptide: ATP-dependent RNA helicase ddx54 (1091 aa).

Disordered regions lie at residues Met-1–Phe-63 and Asp-150–Gly-231. Basic and acidic residues predominate over residues Met-26 to Ser-35. Polar residues predominate over residues Asp-150–Phe-161. A compositionally biased stretch (basic and acidic residues) spans Lys-196 to Glu-207. Residues Gly-230–Arg-258 carry the Q motif motif. In terms of domain architecture, Helicase ATP-binding spans Ile-261 to Ile-433. Residue Ala-274–Thr-281 coordinates ATP. Residues Asp-381–Asp-384 carry the DEAD box motif. The region spanning Thr-478–Asn-632 is the Helicase C-terminal domain. Disordered stretches follow at residues Glu-801–Asn-896 and Lys-933–Lys-1091. Over residues Asp-814 to Glu-823 the composition is skewed to basic and acidic residues. Residues Asn-824–Glu-855 are compositionally biased toward acidic residues. Basic and acidic residues-rich tracts occupy residues Glu-865 to Lys-874, Asp-944 to Lys-975, and Gln-1008 to Ala-1019. The segment covering Ser-1020–Lys-1029 has biased composition (basic residues). Over residues Arg-1031 to Met-1052 the composition is skewed to basic and acidic residues. The span at Ser-1068 to Phe-1079 shows a compositional bias: gly residues.

Belongs to the DEAD box helicase family. DDX54/DBP10 subfamily.

The protein localises to the nucleus. The protein resides in the nucleolus. The catalysed reaction is ATP + H2O = ADP + phosphate + H(+). Functionally, ATP-binding RNA helicase which may be involved in the ribosome biogenesis. This Dictyostelium discoideum (Social amoeba) protein is ATP-dependent RNA helicase ddx54 (helA).